A 228-amino-acid polypeptide reads, in one-letter code: ATP-dependent dethiobiotin synthetase BioD (228 aa).

12–17 is an ATP binding site; sequence EIGKTT. T16 contributes to the Mg(2+) binding site. K37 is a catalytic residue. S41 is a substrate binding site. ATP-binding positions include D54, 116-119, and 205-207; these read EGAG and PRL. Positions 54 and 116 each coordinate Mg(2+).

The protein belongs to the dethiobiotin synthetase family. As to quaternary structure, homodimer. It depends on Mg(2+) as a cofactor.

It localises to the cytoplasm. It carries out the reaction (7R,8S)-7,8-diammoniononanoate + CO2 + ATP = (4R,5S)-dethiobiotin + ADP + phosphate + 3 H(+). It functions in the pathway cofactor biosynthesis; biotin biosynthesis; biotin from 7,8-diaminononanoate: step 1/2. Its function is as follows. Catalyzes a mechanistically unusual reaction, the ATP-dependent insertion of CO2 between the N7 and N8 nitrogen atoms of 7,8-diaminopelargonic acid (DAPA, also called 7,8-diammoniononanoate) to form a ureido ring. The protein is ATP-dependent dethiobiotin synthetase BioD of Pseudomonas aeruginosa (strain LESB58).